Consider the following 64-residue polypeptide: DNA gyrase inhibitor YacG (64 aa).

Positions 6, 9, 25, and 29 each coordinate Zn(2+).

This sequence belongs to the DNA gyrase inhibitor YacG family. In terms of assembly, interacts with GyrB. Requires Zn(2+) as cofactor.

Its function is as follows. Inhibits all the catalytic activities of DNA gyrase by preventing its interaction with DNA. Acts by binding directly to the C-terminal domain of GyrB, which probably disrupts DNA binding by the gyrase. The protein is DNA gyrase inhibitor YacG of Haemophilus influenzae (strain ATCC 51907 / DSM 11121 / KW20 / Rd).